A 360-amino-acid chain; its full sequence is METKEFDSYSERKAFDETKTGVKGLIDAHITEIPRIFCLPQGSLSDKKPFVSTTDFAIPIIDFEGLHVSREDIVGKIKDAASNWGFFQVINHGVPLNVLQEIQDGVRRFHEEAPEVKKTYFTRDATKRFVYNSNFDLYSSSSCVNWRDSFACYMAPDPPNPEDLPVACRVAMFEYSKHMMRLGDLLFELLSEALGLRSDKLKSMDCMKGLLLLCHYYPPCPQPDLTIGTNNHSDNSFLTILLQDQIGGLQIFHQDCWVDVSPIPGALVINMGDFLQLITNDKVISVEHRVLANRAATPRISVASFFSTSMRPNSTVYGPIKELLSEENPSKYRVIDLKEYTEGYFKKGLDGTSYLSHYKI.

In terms of domain architecture, Fe2OG dioxygenase spans 208–309 (KGLLLLCHYY…ISVASFFSTS (102 aa)). Fe cation is bound by residues histidine 232, aspartate 234, and histidine 288. Arginine 299 contacts 2-oxoglutarate.

It belongs to the iron/ascorbate-dependent oxidoreductase family. The cofactor is Fe(2+). Constitutively expressed in leaves and blades.

In Arabidopsis thaliana (Mouse-ear cress), this protein is 1-aminocyclopropane-1-carboxylate oxidase homolog 6.